The sequence spans 315 residues: Mitochondrial glutamate carrier 2 (315 aa).

Solcar repeat units lie at residues 6–92 (LSIT…FRRL), 100–210 (RNLK…LNNL), and 219–308 (ASFA…GIGE). Helical transmembrane passes span 12 to 32 (LINGGVAGLVGVTCVFPIDLA), 61 to 81 (FFGMYRGAAVNLTLVTPEKAI), and 106 to 126 (MLAGCGAGMCQVVVTCPMEML). The interval 141–160 (QGSASAPSTSRSYTTGSAST) is disordered. Residues 142-159 (GSASAPSTSRSYTTGSAS) are compositionally biased toward polar residues. Ser145 bears the Phosphoserine mark. The next 3 membrane-spanning stretches (helical) occupy residues 185–205 (GLGATLLRDIPFSIIYFPLFA), 225–245 (FVSGCVAGSIAAVAVTPLDVL), and 288–308 (ALVIAPLFGIAQGVYFIGIGE).

The protein belongs to the mitochondrial carrier (TC 2.A.29) family. Expressed in brain, to a lesser extent in testis, and poorly in all the other tissues.

The protein localises to the mitochondrion inner membrane. The catalysed reaction is L-glutamate(in) + H(+)(in) = L-glutamate(out) + H(+)(out). Its function is as follows. Responsible for the transport of glutamate from the cytosol into the mitochondrial matrix with the concomitant import of a proton (symport system). This Homo sapiens (Human) protein is Mitochondrial glutamate carrier 2.